We begin with the raw amino-acid sequence, 124 residues long: uncharacterized protein (124 aa).

The first 21 residues, 1-21 (MFLLSLLHFFHPSLIPSLSLS), serve as a signal peptide directing secretion.

This is an uncharacterized protein from Schizosaccharomyces pombe (strain 972 / ATCC 24843) (Fission yeast).